The primary structure comprises 313 residues: Glyoxylate/hydroxypyruvate reductase A (313 aa).

Arg228 is a catalytic residue. The active-site Proton donor is His276.

Belongs to the D-isomer specific 2-hydroxyacid dehydrogenase family. GhrA subfamily.

It is found in the cytoplasm. The catalysed reaction is glycolate + NADP(+) = glyoxylate + NADPH + H(+). It catalyses the reaction (R)-glycerate + NAD(+) = 3-hydroxypyruvate + NADH + H(+). The enzyme catalyses (R)-glycerate + NADP(+) = 3-hydroxypyruvate + NADPH + H(+). Catalyzes the NADPH-dependent reduction of glyoxylate and hydroxypyruvate into glycolate and glycerate, respectively. This chain is Glyoxylate/hydroxypyruvate reductase A, found in Yersinia enterocolitica serotype O:8 / biotype 1B (strain NCTC 13174 / 8081).